The chain runs to 91 residues: MIPRNFFFTILICPFNVCATFTAVATASPDCIGPFASYALFAFVTCICVCSIVCLVINFFQLVDWIFVRIAYLRHHPEYRNQNVAALLRLI.

A signal peptide spans 1–22 (MIPRNFFFTILICPFNVCATFT). The Lumenal portion of the chain corresponds to 23–34 (AVATASPDCIGP). The chain crosses the membrane as a helical span at residues 35–60 (FASYALFAFVTCICVCSIVCLVINFF). Residues 61-91 (QLVDWIFVRIAYLRHHPEYRNQNVAALLRLI) lie on the Cytoplasmic side of the membrane.

It belongs to the adenoviridae E3B family.

It is found in the host endoplasmic reticulum membrane. Functionally, down-regulates the EGF receptor. This chain is Early E3B 10.4 kDa protein, found in Human adenovirus B serotype 3 (HAdV-3).